A 131-amino-acid chain; its full sequence is Phosphoribosyl-AMP cyclohydrolase (131 aa).

Mg(2+) is bound at residue Asp78. Cys79 is a binding site for Zn(2+). Residues Asp80 and Asp82 each coordinate Mg(2+). The Zn(2+) site is built by Cys96 and Cys103.

The protein belongs to the PRA-CH family. In terms of assembly, homodimer. It depends on Mg(2+) as a cofactor. Zn(2+) is required as a cofactor.

It is found in the cytoplasm. The enzyme catalyses 1-(5-phospho-beta-D-ribosyl)-5'-AMP + H2O = 1-(5-phospho-beta-D-ribosyl)-5-[(5-phospho-beta-D-ribosylamino)methylideneamino]imidazole-4-carboxamide. The protein operates within amino-acid biosynthesis; L-histidine biosynthesis; L-histidine from 5-phospho-alpha-D-ribose 1-diphosphate: step 3/9. Its function is as follows. Catalyzes the hydrolysis of the adenine ring of phosphoribosyl-AMP. The polypeptide is Phosphoribosyl-AMP cyclohydrolase (Neisseria gonorrhoeae (strain ATCC 700825 / FA 1090)).